A 132-amino-acid polypeptide reads, in one-letter code: Profilin-1 (132 aa).

This sequence belongs to the profilin family. In terms of assembly, occurs in many kinds of cells as a complex with monomeric actin in a 1:1 ratio. In terms of tissue distribution, expressed in the nerve ring during late embryonic stages. In adults, expression is seen in the neurons, vulva and somatic gonad.

The protein localises to the cytoplasm. Its subcellular location is the cytoskeleton. In terms of biological role, binds to actin and affects the structure of the cytoskeleton. At high concentrations, profilin prevents the polymerization of actin, whereas it enhances it at low concentrations. By binding to PIP2, it inhibits the formation of IP3 and DG. Also binds to poly(L-proline) and phosphatidylinositol 4,5-bisphosphate micelles. This Caenorhabditis elegans protein is Profilin-1 (pfn-1).